The primary structure comprises 201 residues: 3-isopropylmalate dehydratase small subunit (201 aa).

It belongs to the LeuD family. LeuD type 1 subfamily. In terms of assembly, heterodimer of LeuC and LeuD.

It catalyses the reaction (2R,3S)-3-isopropylmalate = (2S)-2-isopropylmalate. It functions in the pathway amino-acid biosynthesis; L-leucine biosynthesis; L-leucine from 3-methyl-2-oxobutanoate: step 2/4. Catalyzes the isomerization between 2-isopropylmalate and 3-isopropylmalate, via the formation of 2-isopropylmaleate. The protein is 3-isopropylmalate dehydratase small subunit of Rhizobium meliloti (strain 1021) (Ensifer meliloti).